The chain runs to 170 residues: Protein Rex (170 aa).

Residues 1–16 (MPKTRRQRTRRARRNR) are compositionally biased toward basic residues. Disordered regions lie at residues 1–27 (MPKTRRQRTRRARRNRPPTPWPISQDL) and 69–170 (VQST…GEKP). Residues 2-19 (PKTRRQRTRRARRNRPPT) carry the Nuclear localization signal, and RNA-binding (RxRE) motif. Positions 57–71 (PPAYIDMPSWPPVQS) are homomultimerization. Positions 82 to 95 (ALSALLSNTLSLAS) are enriched in low complexity. Residues 83 to 94 (LSALLSNTLSLA) carry the Nuclear export signal motif. The tract at residues 124–132 (PSFNQCEST) is homomultimerization. Positions 143 to 160 (PSGISSPPSPSPNLASVP) are enriched in low complexity. Phosphoserine; by host occurs at positions 151 and 153. Polar residues predominate over residues 161–170 (KTSTPPGEKP).

It belongs to the deltaretrovirus Rex protein family. In terms of assembly, homomultimer. Phosphorylation is essential for RNA-binding and function.

It localises to the host nucleus. Its subcellular location is the host nucleolus. The protein resides in the host cytoplasm. In terms of biological role, rex escorts unspliced gag-pro-pol and singly spliced env mRNAs out of the nucleus of infected cells. These mRNAs carry a recognition sequence called Rex responsive element (RxRE or XRE) located at the 3' region of the long terminal repeat (LTR). This function is essential since most HTLV proteins are translated from unspliced or partially spliced pre-mRNAs that cannot exit the nucleus by the pathway used by fully processed cellular mRNAs. This chain is Protein Rex, found in Human T-cell leukemia virus 2 (HTLV-2).